A 332-amino-acid polypeptide reads, in one-letter code: DNA-directed RNA polymerase subunit alpha (332 aa).

The tract at residues 1-227 is alpha N-terminal domain (alpha-NTD); that stretch reads MKKFAETPFL…VMYSQMSVFN (227 aa). The tract at residues 248 to 332 is alpha C-terminal domain (alpha-CTD); the sequence is KELVIRIDDL…LRRKLEQLKA (85 aa).

Belongs to the RNA polymerase alpha chain family. As to quaternary structure, homodimer. The RNAP catalytic core consists of 2 alpha, 1 beta, 1 beta' and 1 omega subunit. When a sigma factor is associated with the core the holoenzyme is formed, which can initiate transcription.

It carries out the reaction RNA(n) + a ribonucleoside 5'-triphosphate = RNA(n+1) + diphosphate. In terms of biological role, DNA-dependent RNA polymerase catalyzes the transcription of DNA into RNA using the four ribonucleoside triphosphates as substrates. The sequence is that of DNA-directed RNA polymerase subunit alpha from Aliarcobacter butzleri (strain RM4018) (Arcobacter butzleri).